A 419-amino-acid chain; its full sequence is Probable 3-isopropylmalate dehydratase large subunit (419 aa).

Residues C299, C359, and C362 each coordinate [4Fe-4S] cluster.

Belongs to the aconitase/IPM isomerase family. LeuC type 2 subfamily. Heterodimer of LeuC and LeuD. It depends on [4Fe-4S] cluster as a cofactor.

The enzyme catalyses (2R,3S)-3-isopropylmalate = (2S)-2-isopropylmalate. It participates in amino-acid biosynthesis; L-leucine biosynthesis; L-leucine from 3-methyl-2-oxobutanoate: step 2/4. Catalyzes the isomerization between 2-isopropylmalate and 3-isopropylmalate, via the formation of 2-isopropylmaleate. The sequence is that of Probable 3-isopropylmalate dehydratase large subunit from Methanothermobacter thermautotrophicus (strain ATCC 29096 / DSM 1053 / JCM 10044 / NBRC 100330 / Delta H) (Methanobacterium thermoautotrophicum).